Here is a 355-residue protein sequence, read N- to C-terminus: MTKSYSESGLMGEPQPQGPPSWTDECLSSQDEDHEADKKEDELEAMNAEEDSLRNGGDEEDEDEDLEEEDEEEEEDDQKPKRRGPKKKKMTKARLERFKLRRMKANARERNRMHGLNAALDNLRKVVPCYSKTQKLSKIETLRLAKNYIWALSEILRSGKSPDLVSFVQTLCKGLSQPTTNLVAGCLQLNPRTFLPEQNPDMPPHLPTASASFPVHPYSYQSPGLPSPPYGTMDSSHVFQVKPPPHAYSATLEPFFESPLTDCTSPSFDGPLSPPLSINGNFSFKHEPSAEFEKNYAFTMHYPAATLAGPQSHGSIFSGATAPRCEIPIDNIMSFDSHSHHERVMSAQLNAIFHD.

The disordered stretch occupies residues 1–93; it reads MTKSYSESGL…GPKKKKMTKA (93 aa). The span at 58–77 shows a compositional bias: acidic residues; it reads DEEDEDEDLEEEDEEEEEDD. Residues 80–92 are compositionally biased toward basic residues; the sequence is PKRRGPKKKKMTK. The Nuclear localization signal signature appears at 86 to 92; it reads KKKKMTK. Positions 100–152 constitute a bHLH domain; sequence LRRMKANARERNRMHGLNAALDNLRKVVPCYSKTQKLSKIETLRLAKNYIWAL. 4 positions are modified to phosphoserine: Ser-161, Ser-258, Ser-265, and Ser-273. Ser-334 carries the phosphoserine; by CaMK2 modification.

In terms of assembly, efficient DNA-binding requires dimerization with another bHLH protein. Heterodimer with TCF3/E47; the heterodimer is inhibited in presence of ID2, but not NR0B2, to E-box element. Interacts with EP300; the interaction is inhibited by NR0B2. Interacts with RREB1. Interacts with ATOH8. Phosphorylated. In islet cells, phosphorylated on Ser-273 upon glucose stimulation; which may be required for nuclear localization. In activated neurons, phosphorylated on Ser-334; which promotes dendritic growth. Phosphorylated by MAPK1; phosphorylation regulates heterodimerization and DNA-binding activities. Phosphorylation on Ser-265 and Ser-273 increases transactivation on the insulin promoter in glucose-stimulated insulinoma cells. Most abundant in pancreatic alpha- and beta-cells, less in brain and intestine.

Its subcellular location is the cytoplasm. The protein localises to the nucleus. Acts as a transcriptional activator: mediates transcriptional activation by binding to E box-containing promoter consensus core sequences 5'-CANNTG-3'. Associates with the p300/CBP transcription coactivator complex to stimulate transcription of the secretin gene as well as the gene encoding the cyclin-dependent kinase inhibitor CDKN1A. Contributes to the regulation of several cell differentiation pathways, like those that promote the formation of early retinal ganglion cells, inner ear sensory neurons, granule cells forming either the cerebellum or the dentate gyrus cell layer of the hippocampus, endocrine islet cells of the pancreas and enteroendocrine cells of the small intestine. Together with PAX6 or SIX3, is required for the regulation of amacrine cell fate specification. Also required for dendrite morphogenesis and maintenance in the cerebellar cortex. Associates with chromatin to enhancer regulatory elements in genes encoding key transcriptional regulators of neurogenesis. This chain is Neurogenic differentiation factor 1 (NEUROD1), found in Mesocricetus auratus (Golden hamster).